The chain runs to 109 residues: Putative transposase MJ0856.1 (109 aa).

Residues Cys36, Cys39, Cys62, and Cys65 each coordinate Zn(2+).

Belongs to the transposase 35 family.

The protein is Putative transposase MJ0856.1 of Methanocaldococcus jannaschii (strain ATCC 43067 / DSM 2661 / JAL-1 / JCM 10045 / NBRC 100440) (Methanococcus jannaschii).